Here is a 204-residue protein sequence, read N- to C-terminus: Synaptosomal-associated protein 25-A (204 aa).

The segment covering 1–11 (MAEDADMRNEL) has biased composition (basic and acidic residues). Residues 1–25 (MAEDADMRNELSDMQQRADQLADES) are disordered. T-SNARE coiled-coil homology domains lie at 19 to 81 (DQLA…LNDL) and 138 to 200 (DARE…ATKM).

This sequence belongs to the SNAP-25 family.

Its subcellular location is the synapse. The protein resides in the synaptosome. It localises to the cell membrane. In terms of biological role, may play an important role in the synaptic function of specific neuronal systems. Associates with proteins involved in vesicle docking and membrane fusion. The chain is Synaptosomal-associated protein 25-A (snap25a) from Carassius auratus (Goldfish).